Consider the following 171-residue polypeptide: Putative metal-dependent hydrolase BH0277 (171 aa).

Zn(2+) contacts are provided by His-64, His-155, and His-159.

The protein belongs to the metal hydrolase YfiT family. As to quaternary structure, homodimer. Zn(2+) serves as cofactor.

Its subcellular location is the cytoplasm. Functionally, possible metal-dependent hydrolase. This Halalkalibacterium halodurans (strain ATCC BAA-125 / DSM 18197 / FERM 7344 / JCM 9153 / C-125) (Bacillus halodurans) protein is Putative metal-dependent hydrolase BH0277.